Here is a 206-residue protein sequence, read N- to C-terminus: MGNLLVVIAVALFIAAIVVLVVAIRRPKTPATPGGRRDPLAFDAMPQFGPRQLGPGAIVSHGGIDYVVRGSVTFREGPFVWWEHLLEGGDTPTWLSVQEDDGRLELAMWVKRTDLGLQPGGQHVIDGVTFQETERGHAGYTTEGTTGLPAGGEMDYVDCASAGQGADESMLLSFERWAPDMGWEIATGKSVLAGELTVYPAPPVSA.

A helical transmembrane segment spans residues 4–24 (LLVVIAVALFIAAIVVLVVAI).

Its subcellular location is the membrane. This is an uncharacterized protein from Mycobacterium tuberculosis (strain CDC 1551 / Oshkosh).